The primary structure comprises 119 residues: Large ribosomal subunit protein bL20 (119 aa).

It belongs to the bacterial ribosomal protein bL20 family.

In terms of biological role, binds directly to 23S ribosomal RNA and is necessary for the in vitro assembly process of the 50S ribosomal subunit. It is not involved in the protein synthesizing functions of that subunit. This is Large ribosomal subunit protein bL20 from Legionella pneumophila (strain Paris).